The chain runs to 421 residues: MAAGFGRCCRVLRSISRFHWRSQHTKANRQREPGLGFSFEFTEQQKEFQATARKFAREEIIPVAAEYDKTGEYPVPLIRRAWELGLMNTHIPENCGGLGLGTFDACLISEELAYGCTGVQTAIEGNSLGQMPIIIAGNDQQKKKYLGRMTEEPLMCAYCVTEPGAGSDVAGIKTKAEKKGDEYIINGQKMWITNGGKANWYFLLARSDPDPKAPANKAFTGFIVEADTPGIQIGRKELNMGQRCSDTRGIVFEDVKVPKENVLIGDGAGFKVAMGAFDKTRPVVAAGAVGLAQRALDEATKYALERKTFGKLLVEHQAISFMLAEMAMKVELARMSYQRAAWEVDSGRRNTYYASIAKAFAGDIANQLATDAVQILGGNGFNTEYPVEKLMRDAKIYQIYEGTSQIQRLIVAREHIDKYKN.

A mitochondrion-targeting transit peptide spans 1 to 25 (MAAGFGRCCRVLRSISRFHWRSQHT). Lysine 69 bears the N6-acetyllysine; alternate mark. An N6-succinyllysine; alternate modification is found at lysine 69. 158–167 (YCVTEPGAGS) contributes to the FAD binding site. Serine 167 provides a ligand contact to octanoyl-CoA. Lysine 179 carries the N6-succinyllysine modification. 191–193 (WIT) provides a ligand contact to FAD. Residues lysine 212, lysine 217, lysine 259, and lysine 271 each carry the N6-acetyllysine; alternate modification. N6-succinyllysine; alternate occurs at positions 212, 217, 259, and 271. Aspartate 278 serves as a coordination point for octanoyl-CoA. Lysine 279 is subject to N6-acetyllysine. Arginine 281 serves as a coordination point for octanoyl-CoA. At lysine 301 the chain carries N6-acetyllysine. FAD contacts are provided by residues 306–308 (RKT) and 316–317 (HQ). Phosphothreonine is present on threonine 351. Residues 374–378 (QILGG) and 401–405 (EGTSQ) contribute to the FAD site. Glutamate 401 provides a ligand contact to octanoyl-CoA. Catalysis depends on glutamate 401, which acts as the Proton acceptor.

Belongs to the acyl-CoA dehydrogenase family. In terms of assembly, homotetramer. Interacts with the heterodimeric electron transfer flavoprotein ETF. Requires FAD as cofactor. Post-translationally, acetylated. Could occur at proximity of the cofactor-binding sites and reduce the catalytic activity. Could be deacetylated by SIRT3.

Its subcellular location is the mitochondrion matrix. The catalysed reaction is a medium-chain 2,3-saturated fatty acyl-CoA + oxidized [electron-transfer flavoprotein] + H(+) = a medium-chain (2E)-enoyl-CoA + reduced [electron-transfer flavoprotein]. The enzyme catalyses pentanoyl-CoA + oxidized [electron-transfer flavoprotein] + H(+) = (2E)-pentenoyl-CoA + reduced [electron-transfer flavoprotein]. It catalyses the reaction hexanoyl-CoA + oxidized [electron-transfer flavoprotein] + H(+) = (2E)-hexenoyl-CoA + reduced [electron-transfer flavoprotein]. It carries out the reaction octanoyl-CoA + oxidized [electron-transfer flavoprotein] + H(+) = (2E)-octenoyl-CoA + reduced [electron-transfer flavoprotein]. The catalysed reaction is decanoyl-CoA + oxidized [electron-transfer flavoprotein] + H(+) = (2E)-decenoyl-CoA + reduced [electron-transfer flavoprotein]. The enzyme catalyses dodecanoyl-CoA + oxidized [electron-transfer flavoprotein] + H(+) = (2E)-dodecenoyl-CoA + reduced [electron-transfer flavoprotein]. It catalyses the reaction tetradecanoyl-CoA + oxidized [electron-transfer flavoprotein] + H(+) = (2E)-tetradecenoyl-CoA + reduced [electron-transfer flavoprotein]. It carries out the reaction oxidized [electron-transfer flavoprotein] + hexadecanoyl-CoA + H(+) = (2E)-hexadecenoyl-CoA + reduced [electron-transfer flavoprotein]. It functions in the pathway lipid metabolism; mitochondrial fatty acid beta-oxidation. Its function is as follows. Medium-chain specific acyl-CoA dehydrogenase is one of the acyl-CoA dehydrogenases that catalyze the first step of mitochondrial fatty acid beta-oxidation, an aerobic process breaking down fatty acids into acetyl-CoA and allowing the production of energy from fats. The first step of fatty acid beta-oxidation consists in the removal of one hydrogen from C-2 and C-3 of the straight-chain fatty acyl-CoA thioester, resulting in the formation of trans-2-enoyl-CoA. Electron transfer flavoprotein (ETF) is the electron acceptor that transfers electrons to the main mitochondrial respiratory chain via ETF-ubiquinone oxidoreductase (ETF dehydrogenase). Among the different mitochondrial acyl-CoA dehydrogenases, medium-chain specific acyl-CoA dehydrogenase acts specifically on acyl-CoAs with saturated 6 to 12 carbons long primary chains. The polypeptide is Medium-chain specific acyl-CoA dehydrogenase, mitochondrial (Homo sapiens (Human)).